The sequence spans 281 residues: Undecaprenyl-diphosphatase (281 aa).

A run of 7 helical transmembrane segments spans residues I4–I24, A46–F63, F83–K103, V108–W128, A187–Y207, E222–V242, and F257–I277.

This sequence belongs to the UppP family.

It is found in the cell inner membrane. The catalysed reaction is di-trans,octa-cis-undecaprenyl diphosphate + H2O = di-trans,octa-cis-undecaprenyl phosphate + phosphate + H(+). In terms of biological role, catalyzes the dephosphorylation of undecaprenyl diphosphate (UPP). Confers resistance to bacitracin. The polypeptide is Undecaprenyl-diphosphatase (Polynucleobacter necessarius subsp. necessarius (strain STIR1)).